A 155-amino-acid polypeptide reads, in one-letter code: Ribosomal RNA large subunit methyltransferase H (155 aa).

S-adenosyl-L-methionine-binding positions include L73, G104, and 123-128; that span reads LSPLTL.

The protein belongs to the RNA methyltransferase RlmH family. In terms of assembly, homodimer.

Its subcellular location is the cytoplasm. The catalysed reaction is pseudouridine(1915) in 23S rRNA + S-adenosyl-L-methionine = N(3)-methylpseudouridine(1915) in 23S rRNA + S-adenosyl-L-homocysteine + H(+). In terms of biological role, specifically methylates the pseudouridine at position 1915 (m3Psi1915) in 23S rRNA. This is Ribosomal RNA large subunit methyltransferase H from Pseudomonas savastanoi pv. phaseolicola (strain 1448A / Race 6) (Pseudomonas syringae pv. phaseolicola (strain 1448A / Race 6)).